Consider the following 738-residue polypeptide: Eukaryotic translation initiation factor 3 subunit B (738 aa).

Residues 1 to 10 show a composition bias toward polar residues; the sequence is MAPSFENLSE. Positions 1–20 are disordered; sequence MAPSFENLSEQDLHEEEEEE. Residues 40 to 126 form the RRM domain; it reads TFVVIDGLPV…HTLLVNKLMD (87 aa). WD repeat units follow at residues 193 to 230, 232 to 289, 301 to 342, 454 to 494, 511 to 554, and 569 to 607; these read AHWTQLFVQWSPKGTYLASVHPQGVQLWGGPTFSKQKQ, PHPF…RSFV, QPKK…LLGK, SLKD…SFFA, IEKK…EKND, and VDHYGVTDIEWDPTGRYVVSGASAWTHQMENGFNLHTFS. The interval 693–720 is disordered; the sequence is EAYGLPEEADQPKAAKDAPTNTEDKGET. Residues 702 to 720 show a composition bias toward basic and acidic residues; sequence DQPKAAKDAPTNTEDKGET.

The protein belongs to the eIF-3 subunit B family. In terms of assembly, component of the eukaryotic translation initiation factor 3 (eIF-3) complex.

The protein resides in the cytoplasm. RNA-binding component of the eukaryotic translation initiation factor 3 (eIF-3) complex, which is involved in protein synthesis of a specialized repertoire of mRNAs and, together with other initiation factors, stimulates binding of mRNA and methionyl-tRNAi to the 40S ribosome. The eIF-3 complex specifically targets and initiates translation of a subset of mRNAs involved in cell proliferation. The polypeptide is Eukaryotic translation initiation factor 3 subunit B (prt1) (Emericella nidulans (strain FGSC A4 / ATCC 38163 / CBS 112.46 / NRRL 194 / M139) (Aspergillus nidulans)).